A 402-amino-acid polypeptide reads, in one-letter code: DNA primase DnaG (402 aa).

One can recognise a Toprim domain in the interval P165–V243. Mg(2+) is bound by residues E171, D216, and D218.

Belongs to the archaeal DnaG primase family. As to quaternary structure, forms a ternary complex with MCM helicase and DNA. Component of the archaeal exosome complex. Mg(2+) is required as a cofactor.

The catalysed reaction is ssDNA + n NTP = ssDNA/pppN(pN)n-1 hybrid + (n-1) diphosphate.. RNA polymerase that catalyzes the synthesis of short RNA molecules used as primers for DNA polymerase during DNA replication. Also part of the exosome, which is a complex involved in RNA degradation. Acts as a poly(A)-binding protein that enhances the interaction between heteromeric, adenine-rich transcripts and the exosome. This is DNA primase DnaG from Saccharolobus islandicus (strain Y.N.15.51 / Yellowstone #2) (Sulfolobus islandicus).